Reading from the N-terminus, the 446-residue chain is Tubulin beta chain (446 aa).

Residues Gln11, Glu69, Ser138, Gly142, Thr143, Gly144, Asn204, and Asn226 each coordinate GTP. Glu69 provides a ligand contact to Mg(2+). A disordered region spans residues 423–446 (QQYQDATADEEEGEYEEEPAEEEQ). Acidic residues predominate over residues 429–446 (TADEEEGEYEEEPAEEEQ).

Belongs to the tubulin family. In terms of assembly, dimer of alpha and beta chains. A typical microtubule is a hollow water-filled tube with an outer diameter of 25 nm and an inner diameter of 15 nM. Alpha-beta heterodimers associate head-to-tail to form protofilaments running lengthwise along the microtubule wall with the beta-tubulin subunit facing the microtubule plus end conferring a structural polarity. Microtubules usually have 13 protofilaments but different protofilament numbers can be found in some organisms and specialized cells. Mg(2+) is required as a cofactor.

Its subcellular location is the cytoplasm. It is found in the cytoskeleton. Its function is as follows. Tubulin is the major constituent of microtubules, a cylinder consisting of laterally associated linear protofilaments composed of alpha- and beta-tubulin heterodimers. Microtubules grow by the addition of GTP-tubulin dimers to the microtubule end, where a stabilizing cap forms. Below the cap, tubulin dimers are in GDP-bound state, owing to GTPase activity of alpha-tubulin. The sequence is that of Tubulin beta chain from Pleurotus sajor-caju (Oyster mushroom).